The following is a 73-amino-acid chain: Large ribosomal subunit protein bL31 (73 aa).

This sequence belongs to the bacterial ribosomal protein bL31 family. Type A subfamily. In terms of assembly, part of the 50S ribosomal subunit. Contacts protein L9.

Its function is as follows. Binds the 23S rRNA and interacts with the tRNA in the E site. This chain is Large ribosomal subunit protein bL31 (rpmE), found in Deinococcus radiodurans (strain ATCC 13939 / DSM 20539 / JCM 16871 / CCUG 27074 / LMG 4051 / NBRC 15346 / NCIMB 9279 / VKM B-1422 / R1).